A 421-amino-acid polypeptide reads, in one-letter code: UDP-N-acetylglucosamine 1-carboxyvinyltransferase (421 aa).

Residue 22 to 23 (KN) participates in phosphoenolpyruvate binding. Arginine 93 contributes to the UDP-N-acetyl-alpha-D-glucosamine binding site. Cysteine 117 (proton donor) is an active-site residue. 2-(S-cysteinyl)pyruvic acid O-phosphothioketal is present on cysteine 117. UDP-N-acetyl-alpha-D-glucosamine-binding positions include 122 to 126 (RPVDL), aspartate 308, and leucine 330.

The protein belongs to the EPSP synthase family. MurA subfamily.

It is found in the cytoplasm. The catalysed reaction is phosphoenolpyruvate + UDP-N-acetyl-alpha-D-glucosamine = UDP-N-acetyl-3-O-(1-carboxyvinyl)-alpha-D-glucosamine + phosphate. Its pathway is cell wall biogenesis; peptidoglycan biosynthesis. In terms of biological role, cell wall formation. Adds enolpyruvyl to UDP-N-acetylglucosamine. The polypeptide is UDP-N-acetylglucosamine 1-carboxyvinyltransferase (Helicobacter hepaticus (strain ATCC 51449 / 3B1)).